The following is an 81-amino-acid chain: Small ribosomal subunit protein bS18 (81 aa).

This sequence belongs to the bacterial ribosomal protein bS18 family. Part of the 30S ribosomal subunit. Forms a tight heterodimer with protein bS6.

Its function is as follows. Binds as a heterodimer with protein bS6 to the central domain of the 16S rRNA, where it helps stabilize the platform of the 30S subunit. The chain is Small ribosomal subunit protein bS18 from Leptospira borgpetersenii serovar Hardjo-bovis (strain JB197).